Here is a 366-residue protein sequence, read N- to C-terminus: D-alanine--D-alanine ligase (366 aa).

An ATP-grasp domain is found at 150 to 353; that stretch reads KRVLRDAGVP…YPALVDRLIV (204 aa). An ATP-binding site is contributed by 180–235; that stretch reads IGQLGLPLFIKPASQGSSVGVSKVTDRAGFAAALALAFRYDAKVLVEQGISGREIE. Residues Asp307, Glu320, and Asn322 each contribute to the Mg(2+) site.

The protein belongs to the D-alanine--D-alanine ligase family. Requires Mg(2+) as cofactor. Mn(2+) is required as a cofactor.

The protein localises to the cytoplasm. The catalysed reaction is 2 D-alanine + ATP = D-alanyl-D-alanine + ADP + phosphate + H(+). It functions in the pathway cell wall biogenesis; peptidoglycan biosynthesis. In terms of biological role, cell wall formation. The protein is D-alanine--D-alanine ligase of Sodalis glossinidius (strain morsitans).